The following is a 432-amino-acid chain: MTVYHFVGIKGTGMSPLAQILHDTGYQVQGSDIEKQIFTQAALEKRNIPIYPFSADNIKPGLTVIAGNAFPDSHPEIAKALAEGIPVIRYHKFLAEYMKKYTSVAVTGAHGKTSTTGLLAHVMQQAKPTSFLIGDGTGRGNESSEYFVFEACEYRRHFLSYQPDYAIMTNIDFDHPDYFANIDDVFDAFQNMALQVNKGIIACGDDEYLPKIHANVPVVYYGTGEENDFQARNIVKNTEGTTFDVFVRNTFYDTFYIPAYGHHNVLNSLAVIALCHYEEIDVNMIKLGLESFGGVKRRFNEKVIGSQVLIDDYAHHPTEIKVTIEAARQKYPEREIIAVFQPHTFTRTQSFLDEFAESLSAADRVYLCDIFGSARENVGKLTITDLQEKIANAELIEENDTSVLKAHEGAVLIFMGAGDIQKYMRAYENVIA.

108-114 (GAHGKTS) is a binding site for ATP.

Belongs to the MurCDEF family.

The protein resides in the cytoplasm. It catalyses the reaction UDP-N-acetyl-alpha-D-muramate + L-alanine + ATP = UDP-N-acetyl-alpha-D-muramoyl-L-alanine + ADP + phosphate + H(+). The protein operates within cell wall biogenesis; peptidoglycan biosynthesis. Its function is as follows. Cell wall formation. The polypeptide is UDP-N-acetylmuramate--L-alanine ligase (Bacillus velezensis (strain DSM 23117 / BGSC 10A6 / LMG 26770 / FZB42) (Bacillus amyloliquefaciens subsp. plantarum)).